Here is a 196-residue protein sequence, read N- to C-terminus: dITP/XTP pyrophosphatase (196 aa).

Substrate is bound at residue 10-15 (TSNKGK). Aspartate 71 serves as the catalytic Proton acceptor. Aspartate 71 contributes to the Mg(2+) binding site. Substrate-binding positions include serine 72, 156 to 159 (FGYD), lysine 179, and 184 to 185 (HR).

The protein belongs to the HAM1 NTPase family. In terms of assembly, homodimer. Requires Mg(2+) as cofactor.

It catalyses the reaction XTP + H2O = XMP + diphosphate + H(+). The catalysed reaction is dITP + H2O = dIMP + diphosphate + H(+). It carries out the reaction ITP + H2O = IMP + diphosphate + H(+). Pyrophosphatase that catalyzes the hydrolysis of nucleoside triphosphates to their monophosphate derivatives, with a high preference for the non-canonical purine nucleotides XTP (xanthosine triphosphate), dITP (deoxyinosine triphosphate) and ITP. Seems to function as a house-cleaning enzyme that removes non-canonical purine nucleotides from the nucleotide pool, thus preventing their incorporation into DNA/RNA and avoiding chromosomal lesions. In Haemophilus ducreyi (strain 35000HP / ATCC 700724), this protein is dITP/XTP pyrophosphatase.